The primary structure comprises 206 residues: Pyridoxine/pyridoxamine 5'-phosphate oxidase (206 aa).

Residues 53-58, 68-69, lysine 75, and glutamine 97 each bind FMN; these read RMVLLK and YT. A substrate-binding site is contributed by lysine 58. Substrate is bound by residues tyrosine 115, arginine 119, and serine 123. FMN is bound by residues 132–133 and tryptophan 177; that span reads QS. Residue 183-185 participates in substrate binding; the sequence is RLH. Arginine 187 is an FMN binding site.

Belongs to the pyridoxamine 5'-phosphate oxidase family. In terms of assembly, homodimer. The cofactor is FMN.

It catalyses the reaction pyridoxamine 5'-phosphate + O2 + H2O = pyridoxal 5'-phosphate + H2O2 + NH4(+). It carries out the reaction pyridoxine 5'-phosphate + O2 = pyridoxal 5'-phosphate + H2O2. Its pathway is cofactor metabolism; pyridoxal 5'-phosphate salvage; pyridoxal 5'-phosphate from pyridoxamine 5'-phosphate: step 1/1. The protein operates within cofactor metabolism; pyridoxal 5'-phosphate salvage; pyridoxal 5'-phosphate from pyridoxine 5'-phosphate: step 1/1. In terms of biological role, catalyzes the oxidation of either pyridoxine 5'-phosphate (PNP) or pyridoxamine 5'-phosphate (PMP) into pyridoxal 5'-phosphate (PLP). This Rhizobium etli (strain CIAT 652) protein is Pyridoxine/pyridoxamine 5'-phosphate oxidase.